The primary structure comprises 188 residues: MSIKSDKWIRRMAQEHGMIEPFVERQVRGEHDSRVISFGVSSYGYDVRCADEFKVFTNINSATVDPKNFDAGSFVDVKSDVCIIPPNSFALARTVEYFRIPRNVLTICLGKSTYARCGIIVNVTPLEPEWEGHVTLEFSNTTTLPAKIYANEGVAQMLFLESDEECEVSYKDRGGKYQGQRGVTLPRT.

DCTP is bound by residues 111–116, 135–137, glutamine 156, tyrosine 170, and glutamine 180; these read KSTYAR and TLE. Glutamate 137 acts as the Proton donor/acceptor in catalysis.

This sequence belongs to the dCTP deaminase family. As to quaternary structure, homotrimer.

The catalysed reaction is dCTP + H2O + H(+) = dUTP + NH4(+). Its pathway is pyrimidine metabolism; dUMP biosynthesis; dUMP from dCTP (dUTP route): step 1/2. Functionally, catalyzes the deamination of dCTP to dUTP. The chain is dCTP deaminase from Pseudomonas putida (strain W619).